A 70-amino-acid polypeptide reads, in one-letter code: Large ribosomal subunit protein bL31c (70 aa).

Belongs to the bacterial ribosomal protein bL31 family. Type A subfamily. As to quaternary structure, part of the 50S ribosomal subunit.

The protein resides in the plastid. It is found in the chloroplast. Binds the 23S rRNA. The polypeptide is Large ribosomal subunit protein bL31c (Emiliania huxleyi (Coccolithophore)).